Consider the following 1023-residue polypeptide: 2-oxoglutarate dehydrogenase complex component E1 (1023 aa).

A mitochondrion-targeting transit peptide spans 1-40 (MFHLRTCAAKLRPLTASQTVKTFSQNRPAAARTFQQIRCY). N6-succinyllysine is present on Lys74. The residue at position 100 (Ser100) is a Phosphoserine. The Ca(2+) site is built by His143, Asp156, and Asp158. Arg312 provides a ligand contact to thiamine diphosphate. Lys401 is modified (N6-acetyllysine). Thiamine diphosphate-binding residues include Asp411, Asn444, and Ile446. Mg(2+) contacts are provided by Asp411, Asn444, and Ile446. A Glycyl lysine isopeptide (Lys-Gly) (interchain with G-Cter in ubiquitin) cross-link involves residue Lys534. Lys564 carries the post-translational modification N6-succinyllysine. A thiamine diphosphate-binding site is contributed by Gln676. Lys970 carries the post-translational modification N6-acetyllysine.

It belongs to the alpha-ketoglutarate dehydrogenase family. In terms of assembly, homodimer. The 2-oxoglutarate dehydrogenase complex is composed of OGDH (2-oxoglutarate dehydrogenase; E1), DLST (dihydrolipoamide succinyltransferase; E2), DLD (dihydrolipoamide dehydrogenase; E3) and the assembly factor KGD4. It contains multiple copies of the three enzymatic components (E1, E2 and E3). In the nucleus, the 2-oxoglutarate dehydrogenase complex associates with KAT2A. Interacts with ABHD11; this interaction maintains the functional lipoylation of the 2-oxoglutarate dehydrogenase complex. Thiamine diphosphate serves as cofactor. It depends on Mg(2+) as a cofactor.

It localises to the mitochondrion. The protein resides in the nucleus. It carries out the reaction N(6)-[(R)-lipoyl]-L-lysyl-[protein] + 2-oxoglutarate + H(+) = N(6)-[(R)-S(8)-succinyldihydrolipoyl]-L-lysyl-[protein] + CO2. With respect to regulation, calcium ions and ADP stimulate, whereas ATP and NADH reduce catalytic activity. Functionally, 2-oxoglutarate dehydrogenase (E1o) component of the 2-oxoglutarate dehydrogenase complex (OGDHC). Participates in the first step, rate limiting for the overall conversion of 2-oxoglutarate to succinyl-CoA and CO(2) catalyzed by the whole OGDHC. Catalyzes the irreversible decarboxylation of 2-oxoglutarate (alpha-ketoglutarate) via the thiamine diphosphate (ThDP) cofactor and subsequent transfer of the decarboxylated acyl intermediate on an oxidized dihydrolipoyl group that is covalently amidated to the E2 enzyme (dihydrolipoyllysine-residue succinyltransferase or DLST). Plays a key role in the Krebs (citric acid) cycle, which is a common pathway for oxidation of fuel molecules, including carbohydrates, fatty acids, and amino acids. Can catalyze the decarboxylation of 2-oxoadipate in vitro, but at a much lower rate than 2-oxoglutarate. Mainly active in the mitochondrion. A fraction of the 2-oxoglutarate dehydrogenase complex also localizes in the nucleus and is required for lysine succinylation of histones: associates with KAT2A on chromatin and provides succinyl-CoA to histone succinyltransferase KAT2A. This is 2-oxoglutarate dehydrogenase complex component E1 from Pongo abelii (Sumatran orangutan).